The following is a 1403-amino-acid chain: Mannuronan C5-epimerase AlgE1 (1403 aa).

7 PbH1 repeats span residues D133–E155, T157–Y179, Q180–T202, T204–R226, A257–G279, A280–V302, and T320–G359. Disordered stretches follow at residues S372–L395 and A408–R428. Hemolysin-type calcium-binding repeat units lie at residues G388 to T403, G406 to L422, G424 to F440, G557 to L573, V574 to F591, E697 to E712, G716 to L732, and G734 to F750. PbH1 repeat units lie at residues D977–E999, T1001–Y1023, L1024–T1046, T1048–R1070, T1101–G1123, T1124–V1146, T1163–E1185, and S1190–G1212. Hemolysin-type calcium-binding repeat units lie at residues G1227–L1243, Y1244–L1261, and G1263–F1279.

Belongs to the D-mannuronate C5-epimerase family. Requires Ca(2+) as cofactor.

The protein localises to the secreted. The catalysed reaction is [(1-&gt;4)-beta-D-mannuronosyl](n) = [alginate](n). It functions in the pathway glycan biosynthesis; alginate biosynthesis. Inhibited by zinc. Converts beta-D-mannuronic acid (M) to alpha-L-guluronic acid (G), producing a polymer with gel-forming capacity, required for the formation of the cyst coat. This is Mannuronan C5-epimerase AlgE1 from Azotobacter vinelandii.